A 316-amino-acid chain; its full sequence is tRNA pseudouridine synthase B (316 aa).

Residue D38 is the Nucleophile of the active site. The PUA domain maps to 238 to 312; it reads YPEVIVKSSA…PVCVLARQAG (75 aa).

The protein belongs to the pseudouridine synthase TruB family. Type 1 subfamily.

The enzyme catalyses uridine(55) in tRNA = pseudouridine(55) in tRNA. Functionally, responsible for synthesis of pseudouridine from uracil-55 in the psi GC loop of transfer RNAs. This is tRNA pseudouridine synthase B from Pelotomaculum thermopropionicum (strain DSM 13744 / JCM 10971 / SI).